The following is a 171-amino-acid chain: Co-chaperone protein HscB (171 aa).

The J domain occupies Asp2 to Leu74.

The protein belongs to the HscB family. As to quaternary structure, interacts with HscA and stimulates its ATPase activity. Interacts with IscU.

Its function is as follows. Co-chaperone involved in the maturation of iron-sulfur cluster-containing proteins. Seems to help targeting proteins to be folded toward HscA. This Salmonella schwarzengrund (strain CVM19633) protein is Co-chaperone protein HscB.